The chain runs to 129 residues: MRHRKSGRQLNRNSSHRQAMFRNMASSLVSHEIIKTTLPKAKELRRVVEPLITLAKVDSVANRRLAFARTRNIETVAKLFNELGPRFAQRAGGYTRILKCGFRTGDNAPMAYIELVDRPEVAAEEATAE.

It belongs to the bacterial ribosomal protein bL17 family. As to quaternary structure, part of the 50S ribosomal subunit. Contacts protein L32.

This chain is Large ribosomal subunit protein bL17, found in Pasteurella multocida (strain Pm70).